A 148-amino-acid chain; its full sequence is Small ribosomal subunit protein bS6 (148 aa).

The interval 96–148 is disordered; the sequence is HEEGQSAMLTRRDDRRERDGDDRPRRREGGFDRGDRGDRGPRRPRDNEAGEGA.

Belongs to the bacterial ribosomal protein bS6 family.

Binds together with bS18 to 16S ribosomal RNA. The sequence is that of Small ribosomal subunit protein bS6 from Brucella melitensis biotype 1 (strain ATCC 23456 / CCUG 17765 / NCTC 10094 / 16M).